The sequence spans 412 residues: DnaJ homolog subfamily A member 2 (412 aa).

A J domain is found at 8–70 (KLYDILGVPP…EKRELYDRYG (63 aa)). Lys39 carries the N6-acetyllysine modification. Residues Ser78 and Ser123 each carry the phosphoserine modification. A CR-type zinc finger spans residues 130-214 (GKTTKLQLSK…CEGKKVIKEV (85 aa)). Lys134 is covalently cross-linked (Glycyl lysine isopeptide (Lys-Gly) (interchain with G-Cter in SUMO2)). Cys143 and Cys146 together coordinate Zn(2+). The CXXCXGXG motif repeat unit spans residues 143 to 150 (CSACSGQG). Lys152 carries the post-translational modification N6-acetyllysine. 6 residues coordinate Zn(2+): Cys159, Cys162, Cys186, Cys189, Cys202, and Cys205. 3 CXXCXGXG motif repeats span residues 159–166 (CSACRGRG), 186–193 (CSDCNGEG), and 202–209 (CKKCEGKK). Residues 365–412 (IGETEEVELQEFDSTRGSGGGQRREAYNDSSDEESSSHHGPGVQCAHQ) are disordered. Residue Tyr391 is modified to Phosphotyrosine. Phosphoserine occurs at positions 394 and 395. At Cys409 the chain carries Cysteine methyl ester. Cys409 carries the S-farnesyl cysteine lipid modification. A propeptide spans 410-412 (AHQ) (removed in mature form).

The protein localises to the membrane. Its function is as follows. Co-chaperone of Hsc70. Stimulates ATP hydrolysis and the folding of unfolded proteins mediated by HSPA1A/B (in vitro). This chain is DnaJ homolog subfamily A member 2 (DNAJA2), found in Homo sapiens (Human).